Consider the following 581-residue polypeptide: Prolactin receptor (581 aa).

Residues 1-24 (MKENAASRVLFILLLFLFASLLNG) form the signal peptide. Topologically, residues 25–237 (QSPPEKPKLI…NDFPVKDTSM (213 aa)) are extracellular. 2 Fibronectin type-III domains span residues 27 to 127 (PPEK…IVEP) and 129 to 229 (PPVN…IPND). A disulfide bridge links C36 with C46. N-linked (GlcNAc...) asparagine glycosylation is present at N59. C75 and C86 are disulfide-bonded. Residue N132 is glycosylated (N-linked (GlcNAc...) asparagine). Residues D211 and H212 each coordinate Zn(2+). Residues 215-219 (WSEWS) carry the WSXWS motif motif. A helical transmembrane segment spans residues 238 to 258 (WIFVGVLSAVICLIMVWAVAL). The Cytoplasmic portion of the chain corresponds to 259 to 581 (KGYSMVTCIL…SAKKAPPALP (323 aa)). The short motif at 267-275 (ILPPVPGPK) is the Box 1 motif element. Basic and acidic residues-rich tracts occupy residues 323-349 (QHLM…DTDS) and 375-388 (HIPE…DPET). Disordered stretches follow at residues 323 to 388 (QHLM…DPET) and 462 to 492 (FKPS…PDQD).

It belongs to the type I cytokine receptor family. Type 1 subfamily. In terms of assembly, interacts with SMARCA1. Interacts with NEK3 and VAV2 and this interaction is prolactin-dependent. In terms of tissue distribution, expressed in all tissues examined; liver, pituitary, adrenal gland, ovary and fetal liver.

Its subcellular location is the membrane. Functionally, this is a receptor for the anterior pituitary hormone prolactin. The chain is Prolactin receptor (PRLR) from Ovis aries (Sheep).